The sequence spans 210 residues: Pyridoxine/pyridoxamine 5'-phosphate oxidase (210 aa).

Substrate is bound by residues 7-10 (RDEY) and lysine 65. FMN contacts are provided by residues 60-65 (RMVLLK), 75-76 (FT), arginine 81, lysine 82, and glutamine 104. 3 residues coordinate substrate: tyrosine 122, arginine 126, and serine 130. Residues 139–140 (QS) and tryptophan 183 each bind FMN. 189 to 191 (RLH) contributes to the substrate binding site. FMN is bound at residue arginine 193.

Belongs to the pyridoxamine 5'-phosphate oxidase family. In terms of assembly, homodimer. FMN is required as a cofactor.

The catalysed reaction is pyridoxamine 5'-phosphate + O2 + H2O = pyridoxal 5'-phosphate + H2O2 + NH4(+). The enzyme catalyses pyridoxine 5'-phosphate + O2 = pyridoxal 5'-phosphate + H2O2. It participates in cofactor metabolism; pyridoxal 5'-phosphate salvage; pyridoxal 5'-phosphate from pyridoxamine 5'-phosphate: step 1/1. It functions in the pathway cofactor metabolism; pyridoxal 5'-phosphate salvage; pyridoxal 5'-phosphate from pyridoxine 5'-phosphate: step 1/1. In terms of biological role, catalyzes the oxidation of either pyridoxine 5'-phosphate (PNP) or pyridoxamine 5'-phosphate (PMP) into pyridoxal 5'-phosphate (PLP). The sequence is that of Pyridoxine/pyridoxamine 5'-phosphate oxidase from Haemophilus influenzae (strain 86-028NP).